The primary structure comprises 588 residues: Lysophospholipase 2 (588 aa).

The segment at Asn15–Ser38 is disordered. Residues Thr31 to Asn574 form the PLA2c domain. Asn41, Asn58, Asn77, Asn84, Asn88, Asn119, Asn123, Asn157, Asn167, Asn228, Asn272, Asn302, Asn340, Asn431, Asn449, Asn478, Asn481, Asn501, Asn510, Asn529, Asn553, Asn570, and Asn574 each carry an N-linked (GlcNAc...) asparagine glycan.

The protein belongs to the lysophospholipase family.

The catalysed reaction is a 1-acyl-sn-glycero-3-phosphocholine + H2O = sn-glycerol 3-phosphocholine + a fatty acid + H(+). Its function is as follows. Catalyzes the release of fatty acids from lysophospholipids. The polypeptide is Lysophospholipase 2 (plb2) (Aspergillus fumigatus (strain ATCC MYA-4609 / CBS 101355 / FGSC A1100 / Af293) (Neosartorya fumigata)).